A 348-amino-acid polypeptide reads, in one-letter code: tRNA N6-adenosine threonylcarbamoyltransferase (348 aa).

Positions 114 and 118 each coordinate Fe cation. Residues 137–141 (LVSGG), aspartate 171, glycine 184, aspartate 188, and asparagine 283 each bind substrate. Aspartate 311 is a Fe cation binding site.

The protein belongs to the KAE1 / TsaD family. Fe(2+) serves as cofactor.

It is found in the cytoplasm. The enzyme catalyses L-threonylcarbamoyladenylate + adenosine(37) in tRNA = N(6)-L-threonylcarbamoyladenosine(37) in tRNA + AMP + H(+). Functionally, required for the formation of a threonylcarbamoyl group on adenosine at position 37 (t(6)A37) in tRNAs that read codons beginning with adenine. Is involved in the transfer of the threonylcarbamoyl moiety of threonylcarbamoyl-AMP (TC-AMP) to the N6 group of A37, together with TsaE and TsaB. TsaD likely plays a direct catalytic role in this reaction. This is tRNA N6-adenosine threonylcarbamoyltransferase from Nocardioides sp. (strain ATCC BAA-499 / JS614).